Reading from the N-terminus, the 246-residue chain is Carbonic anhydrase (246 aa).

The N-terminal stretch at 1-22 (MKTSLGKAALLALSMMPVTVFA) is a signal peptide. Positions 23–246 (SHWSYEGEGS…QPLNGRVVIE (224 aa)) constitute an Alpha-carbonic anhydrase domain. Cysteine 46 and cysteine 201 are disulfide-bonded. Histidine 84 serves as the catalytic Proton acceptor. Zn(2+) is bound by residues histidine 111, histidine 113, and histidine 130. 197 to 198 (TT) provides a ligand contact to substrate.

The protein belongs to the alpha-carbonic anhydrase family. It depends on Zn(2+) as a cofactor.

It is found in the periplasm. It catalyses the reaction hydrogencarbonate + H(+) = CO2 + H2O. Reversible hydration of carbon dioxide. The protein is Carbonic anhydrase (cah) of Klebsiella pneumoniae.